The chain runs to 703 residues: Calpain-8 (703 aa).

The 300-residue stretch at 45 to 344 (LFKDPEFPAC…FSRLEICNLS (300 aa)) folds into the Calpain catalytic domain. Catalysis depends on residues Cys-105, His-262, and Asn-286. The domain III stretch occupies residues 355 to 512 (KWNLVLFNGR…VFSEKKAQAL (158 aa)). A linker region spans residues 513–531 (EIGDAVPGDPHEPHPRDMD). EF-hand domains are found at residues 531 to 566 (DGED…LLSK), 575 to 610 (FNIN…ICKY), 605 to 640 (LKIC…AGFT), and 670 to 703 (IRLE…RALV). Residues 532 to 703 (GEDEHFWSLS…LAEWLCRALV (172 aa)) are domain IV. 9 residues coordinate Ca(2+): Asp-588, Asp-590, Thr-592, Ser-594, Glu-599, Asp-618, Ser-620, Thr-624, and Glu-629.

The protein belongs to the peptidase C2 family. As to quaternary structure, monomer and homooligomer. Interacts with COPS1/GPS1, COPB1, EYA2, NME2, NME4 and TOMM70. Ca(2+) is required as a cofactor. In terms of processing, undergoes autolytic cleavage between Ala-5 and Ala-6 which gives rise to fragments extending from Ala-6 to the C-terminus, Ala-6 to the EF-hand 2 domain and from Ala-6 to the beginning of domain III. In terms of tissue distribution, predominantly expressed in the stomach. Localizes strictly to the surface mucus cells in the gastric epithelium and the mucus-secreting goblet cells in the duodenum.

It is found in the cytoplasm. Its subcellular location is the golgi apparatus. It carries out the reaction Broad endopeptidase specificity.. With respect to regulation, the concentration of calcium for half-maximal activity is 0.3 mM. Inhibited by calpastatin and calpeptin. In terms of biological role, calcium-regulated non-lysosomal thiol-protease. Involved in membrane trafficking in the gastric surface mucus cells (pit cells) and may involve the membrane trafficking of mucus cells via interactions with coat protein. Proteolytically cleaves the beta-subunit of coatomer complex. The polypeptide is Calpain-8 (Capn8) (Mus musculus (Mouse)).